A 231-amino-acid chain; its full sequence is Uracil-DNA glycosylase (231 aa).

The Proton acceptor role is filled by D74.

This sequence belongs to the uracil-DNA glycosylase (UDG) superfamily. UNG family.

It localises to the cytoplasm. It catalyses the reaction Hydrolyzes single-stranded DNA or mismatched double-stranded DNA and polynucleotides, releasing free uracil.. Excises uracil residues from the DNA which can arise as a result of misincorporation of dUMP residues by DNA polymerase or due to deamination of cytosine. The protein is Uracil-DNA glycosylase of Campylobacter jejuni subsp. jejuni serotype O:2 (strain ATCC 700819 / NCTC 11168).